The following is a 704-amino-acid chain: Ion-translocating oxidoreductase complex subunit C (704 aa).

4Fe-4S ferredoxin-type domains lie at 368-397 (MGAP…QQLY) and 407-436 (KATA…VQYF). [4Fe-4S] cluster contacts are provided by Cys-377, Cys-380, Cys-383, Cys-387, Cys-416, Cys-419, Cys-422, and Cys-426. The disordered stretch occupies residues 536-685 (RAKQAAHPMA…ADPRKAAVAA (150 aa)). Over residues 556–565 (KAAVEAAIAR) the composition is skewed to low complexity.

The protein belongs to the 4Fe4S bacterial-type ferredoxin family. RnfC subfamily. The complex is composed of six subunits: RsxA, RsxB, RsxC, RsxD, RsxE and RsxG. It depends on [4Fe-4S] cluster as a cofactor.

The protein localises to the cell inner membrane. Part of a membrane-bound complex that couples electron transfer with translocation of ions across the membrane. Required to maintain the reduced state of SoxR. In Salmonella dublin (strain CT_02021853), this protein is Ion-translocating oxidoreductase complex subunit C.